A 441-amino-acid polypeptide reads, in one-letter code: tRNA modification GTPase MnmE (441 aa).

Residues arginine 23, glutamate 81, and arginine 121 each contribute to the (6S)-5-formyl-5,6,7,8-tetrahydrofolate site. The TrmE-type G domain maps to 219-366 (GFTVVLAGAP…LLDAIQAAAE (148 aa)). GTP-binding positions include 229-234 (NSGKST), 248-254 (SDSPGTT), and 273-276 (DTAG). Mg(2+)-binding residues include serine 233 and threonine 254. Lysine 441 lines the (6S)-5-formyl-5,6,7,8-tetrahydrofolate pocket.

The protein belongs to the TRAFAC class TrmE-Era-EngA-EngB-Septin-like GTPase superfamily. TrmE GTPase family. In terms of assembly, homodimer. Heterotetramer of two MnmE and two MnmG subunits. The cofactor is K(+).

Its subcellular location is the cytoplasm. Its function is as follows. Exhibits a very high intrinsic GTPase hydrolysis rate. Involved in the addition of a carboxymethylaminomethyl (cmnm) group at the wobble position (U34) of certain tRNAs, forming tRNA-cmnm(5)s(2)U34. This Methylobacterium radiotolerans (strain ATCC 27329 / DSM 1819 / JCM 2831 / NBRC 15690 / NCIMB 10815 / 0-1) protein is tRNA modification GTPase MnmE.